The chain runs to 490 residues: Beta-1,3-glucan-binding protein 1 (490 aa).

The first 19 residues, 1–19, serve as a signal peptide directing secretion; sequence MYKQTVVIFLLCFFICVSC. The region spanning 20–119 is the CBM39 domain; that stretch reads YEVPPAKLEA…GEWTVTGYVD (100 aa). Positions 152-490 constitute a GH16 domain; sequence PPTSQNTYPC…QVDYVRVYAL (339 aa). The N-linked (GlcNAc...) asparagine glycan is linked to Asn-372.

The protein belongs to the insect beta-1,3-glucan binding protein family. As to quaternary structure, monomer. In terms of tissue distribution, hemolymph.

The protein localises to the secreted. Functionally, plays a role in the recognition of invading microorganisms activating the phenoloxidase cascade. Binds specifically to beta-1,3-glucan. Binds the Aspergillus niger cell wall component alpha-1,3-glucan, a fungal pathogen-associated molecular pattern (PAMP) that activates the host immune response. The sequence is that of Beta-1,3-glucan-binding protein 1 from Galleria mellonella (Greater wax moth).